The following is a 532-amino-acid chain: NADH-quinone oxidoreductase subunit N 2 (532 aa).

The next 14 membrane-spanning stretches (helical) occupy residues 37-57, 63-83, 107-127, 133-153, 158-178, 192-212, 241-261, 276-296, 302-322, 336-356, 367-387, 411-431, 444-464, and 504-524; these read VAPPTLTALAALAVLVADLFL, RLLGYAALTALAAALALLIPL, FTLVIQALVLGGALLTVLLSL, LPAGEYWFLLLASAAGAALLP, LATLVVALEVASLPAFALVGI, FFLSSVVATAVMLLGVSFVYA, VALTLVGFAFKTAAAPFHFWV, LSVVGKAVGFSGLILVTVVAF, VWGPALAVLAALTMTAGNVAA, LLAWSSVAQAGYLLVPIAAAA, VAYALMYAVVNLGAFAVAAVV, LALGFFLLCLAGLPPGIIGLF, GLGWLAVVMAVNVVIALYYYL, and TAIVLTATAGILLSGVPQTVL.

The protein belongs to the complex I subunit 2 family. In terms of assembly, NDH-1 is composed of 14 different subunits. Subunits NuoA, H, J, K, L, M, N constitute the membrane sector of the complex.

Its subcellular location is the cell membrane. The enzyme catalyses a quinone + NADH + 5 H(+)(in) = a quinol + NAD(+) + 4 H(+)(out). Functionally, NDH-1 shuttles electrons from NADH, via FMN and iron-sulfur (Fe-S) centers, to quinones in the respiratory chain. The immediate electron acceptor for the enzyme in this species is believed to be a menaquinone. Couples the redox reaction to proton translocation (for every two electrons transferred, four hydrogen ions are translocated across the cytoplasmic membrane), and thus conserves the redox energy in a proton gradient. The chain is NADH-quinone oxidoreductase subunit N 2 from Streptomyces griseus subsp. griseus (strain JCM 4626 / CBS 651.72 / NBRC 13350 / KCC S-0626 / ISP 5235).